We begin with the raw amino-acid sequence, 305 residues long: MNNQCKTIAHVLRVNNGQELHVWETPPKENVPFKNNTILIASGFARRMDHFAGLAEYLSENGFHVFRYDSLHHVGLSSGSIDEFTMTTGKNSLCTVYHWLQTKGTQNIGLIAASLSARVAYEVISDLELSFLITAVGVVNLRDTLEKALGFDYLSLPIDELPNDLDFEGHKLGSEVFVRDCFEHHWDTLDSTLDKVANTSVPLIAFTANNDDWVKQEEVYDMLAHIRTGHCKLYSLLGSSHDLGENLVVLRNFYQSVTKAAIAMDGGSLEIDVDFIEPDFEQLTIATVNERRLKAEIESRTPEMA.

Active-site charge relay system residues include Ser-114, Asp-211, and His-241.

Belongs to the LuxD family.

It participates in lipid metabolism; fatty acid reduction for biolumincescence. In terms of biological role, acyl transferase is part of the fatty acid reductase system required for aldehyde biosynthesis; it produces fatty acids for the luminescent reaction. The protein is Acyl transferase (luxD) of Vibrio harveyi (Beneckea harveyi).